Here is a 295-residue protein sequence, read N- to C-terminus: Protoheme IX farnesyltransferase (295 aa).

Transmembrane regions (helical) follow at residues 8–28 (VTKP…FLLA), 35–55 (YPLF…GCVF), 74–94 (VLVK…VLGI), 98–118 (LLLY…GFVI), 132–152 (VYGT…GYCA), 162–182 (LILL…IAIF), 208–228 (ITLY…SGYA), 233–253 (LVVA…GYKA), and 264–284 (FVFS…DFNV).

Belongs to the UbiA prenyltransferase family. Protoheme IX farnesyltransferase subfamily.

Its subcellular location is the cell inner membrane. It carries out the reaction heme b + (2E,6E)-farnesyl diphosphate + H2O = Fe(II)-heme o + diphosphate. It functions in the pathway porphyrin-containing compound metabolism; heme O biosynthesis; heme O from protoheme: step 1/1. Its function is as follows. Converts heme B (protoheme IX) to heme O by substitution of the vinyl group on carbon 2 of heme B porphyrin ring with a hydroxyethyl farnesyl side group. The sequence is that of Protoheme IX farnesyltransferase from Yersinia pseudotuberculosis serotype O:1b (strain IP 31758).